The chain runs to 461 residues: Bifunctional protein GlmU (461 aa).

The tract at residues 1 to 235 (MKAIILAAGL…ITEIFGVNDR (235 aa)) is pyrophosphorylase. UDP-N-acetyl-alpha-D-glucosamine is bound by residues 6–9 (LAAG), lysine 20, glutamine 71, and 77–78 (GT). Mg(2+) is bound at residue aspartate 102. Residues glycine 145, glutamate 160, asparagine 175, and asparagine 233 each contribute to the UDP-N-acetyl-alpha-D-glucosamine site. Mg(2+) is bound at residue asparagine 233. Residues 236-256 (WELSFAESVIKMRILENLARS) form a linker region. The interval 257-461 (GVTIHSPESV…LEDKSKVKDE (205 aa)) is N-acetyltransferase. UDP-N-acetyl-alpha-D-glucosamine contacts are provided by arginine 339 and lysine 357. The active-site Proton acceptor is histidine 369. Positions 372 and 383 each coordinate UDP-N-acetyl-alpha-D-glucosamine. Residues alanine 386, serine 411, glycine 429, and arginine 446 each coordinate acetyl-CoA.

In the N-terminal section; belongs to the N-acetylglucosamine-1-phosphate uridyltransferase family. This sequence in the C-terminal section; belongs to the transferase hexapeptide repeat family. Homotrimer. It depends on Mg(2+) as a cofactor.

Its subcellular location is the cytoplasm. The enzyme catalyses alpha-D-glucosamine 1-phosphate + acetyl-CoA = N-acetyl-alpha-D-glucosamine 1-phosphate + CoA + H(+). It carries out the reaction N-acetyl-alpha-D-glucosamine 1-phosphate + UTP + H(+) = UDP-N-acetyl-alpha-D-glucosamine + diphosphate. Its pathway is nucleotide-sugar biosynthesis; UDP-N-acetyl-alpha-D-glucosamine biosynthesis; N-acetyl-alpha-D-glucosamine 1-phosphate from alpha-D-glucosamine 6-phosphate (route II): step 2/2. It participates in nucleotide-sugar biosynthesis; UDP-N-acetyl-alpha-D-glucosamine biosynthesis; UDP-N-acetyl-alpha-D-glucosamine from N-acetyl-alpha-D-glucosamine 1-phosphate: step 1/1. The protein operates within bacterial outer membrane biogenesis; LPS lipid A biosynthesis. In terms of biological role, catalyzes the last two sequential reactions in the de novo biosynthetic pathway for UDP-N-acetylglucosamine (UDP-GlcNAc). The C-terminal domain catalyzes the transfer of acetyl group from acetyl coenzyme A to glucosamine-1-phosphate (GlcN-1-P) to produce N-acetylglucosamine-1-phosphate (GlcNAc-1-P), which is converted into UDP-GlcNAc by the transfer of uridine 5-monophosphate (from uridine 5-triphosphate), a reaction catalyzed by the N-terminal domain. In Hydrogenobaculum sp. (strain Y04AAS1), this protein is Bifunctional protein GlmU.